Reading from the N-terminus, the 251-residue chain is Cell division protein ZapD (251 aa).

This sequence belongs to the ZapD family. Interacts with FtsZ.

The protein resides in the cytoplasm. Functionally, cell division factor that enhances FtsZ-ring assembly. Directly interacts with FtsZ and promotes bundling of FtsZ protofilaments, with a reduction in FtsZ GTPase activity. This Paraburkholderia phymatum (strain DSM 17167 / CIP 108236 / LMG 21445 / STM815) (Burkholderia phymatum) protein is Cell division protein ZapD.